A 377-amino-acid polypeptide reads, in one-letter code: Flap endonuclease 1 (377 aa).

The interval 1–104 is N-domain; that stretch reads MGIQGLAKLL…GELAKRTERR (104 aa). Residue aspartate 34 participates in Mg(2+) binding. 2 residues coordinate DNA: arginine 47 and arginine 70. Mg(2+) contacts are provided by aspartate 86, glutamate 158, glutamate 160, aspartate 179, and aspartate 181. The interval 122–253 is I-domain; it reads NIDKFSRRLV…KRSVDLIRQH (132 aa). Glutamate 158 contacts DNA. 2 residues coordinate DNA: glycine 231 and aspartate 233. Residue aspartate 233 coordinates Mg(2+). An interaction with PCNA region spans residues 336-344; the sequence is TQGRLDSFF. The segment at 337–377 is disordered; the sequence is QGRLDSFFKVLPSPANKRKLQDGKGSQNKKAKTGGKFKRPK. A compositionally biased stretch (basic residues) spans 363-377; it reads QNKKAKTGGKFKRPK.

It belongs to the XPG/RAD2 endonuclease family. FEN1 subfamily. In terms of assembly, interacts with PCNA. Three molecules of FEN1 bind to one PCNA trimer with each molecule binding to one PCNA monomer. PCNA stimulates the nuclease activity without altering cleavage specificity. The cofactor is Mg(2+). Phosphorylated. Phosphorylation upon DNA damage induces relocalization to the nuclear plasma.

It localises to the nucleus. Its subcellular location is the nucleolus. The protein localises to the nucleoplasm. The protein resides in the mitochondrion. Structure-specific nuclease with 5'-flap endonuclease and 5'-3' exonuclease activities involved in DNA replication and repair. During DNA replication, cleaves the 5'-overhanging flap structure that is generated by displacement synthesis when DNA polymerase encounters the 5'-end of a downstream Okazaki fragment. It enters the flap from the 5'-end and then tracks to cleave the flap base, leaving a nick for ligation. Also involved in the long patch base excision repair (LP-BER) pathway, by cleaving within the apurinic/apyrimidinic (AP) site-terminated flap. Acts as a genome stabilization factor that prevents flaps from equilibrating into structures that lead to duplications and deletions. Also possesses 5'-3' exonuclease activity on nicked or gapped double-stranded DNA, and exhibits RNase H activity. Also involved in replication and repair of rDNA and in repairing mitochondrial DNA. In Nematostella vectensis (Starlet sea anemone), this protein is Flap endonuclease 1.